A 101-amino-acid chain; its full sequence is Integration host factor subunit beta (101 aa).

The protein belongs to the bacterial histone-like protein family. As to quaternary structure, heterodimer of an alpha and a beta chain.

This protein is one of the two subunits of integration host factor, a specific DNA-binding protein that functions in genetic recombination as well as in transcriptional and translational control. This Rhodopseudomonas palustris (strain BisB5) protein is Integration host factor subunit beta.